The sequence spans 2506 residues: Highly reducing polyketide synthase rstn3 (2506 aa).

The region spanning valine 8 to alanine 436 is the Ketosynthase family 3 (KS3) domain. Active-site for beta-ketoacyl synthase activity residues include cysteine 183, histidine 318, and histidine 358. One can recognise a Malonyl-CoA:ACP transacylase (MAT) domain in the interval phenylalanine 547 to glycine 875. An N-terminal hotdog fold region spans residues histidine 941–glutamate 1050. Residues histidine 941–glutamate 1212 form the PKS/mFAS DH domain. Histidine 973 functions as the Proton acceptor; for dehydratase activity in the catalytic mechanism. A C-terminal hotdog fold region spans residues asparagine 1060–glutamate 1212. Aspartate 1125 (proton donor; for dehydratase activity) is an active-site residue. The segment at valine 1263–tyrosine 1563 is methyltransferase (CMet) domain. Positions glycine 1827 to leucine 2093 constitute an Enoyl reductase (ER) domain. One can recognise a Ketoreductase (KR) domain in the interval alanine 2116–isoleucine 2296. Residues alanine 2423–alanine 2501 form the Carrier domain. Serine 2460 carries the post-translational modification O-(pantetheine 4'-phosphoryl)serine.

The cofactor is pantetheine 4'-phosphate.

It functions in the pathway antifungal biosynthesis. Its function is as follows. Highly reducing polyketide synthase; part of the gene cluster that mediates the biosynthesis of the tetrahydropyranyl antifungal agent restricticin that acts as an inhibitor of CYP51 and blocks the ergosterol biosynthesis. The highly reducing polyketide synthase rstn3, the short chain dehydrogenase rstn4, the cyclase rstn5, the FAD-dependent monooxygenase rstn6 and the enoylreductase rstn7 are required to generate the first stable intermediate desmethylrestrictinol. Rstn3 with rstn7 biosynthesize the first polyketide chain intermediate that is reduced by rstn4, followed by epoxidation by rstn6 before 6-endo cyclization via epoxide opening by rstn5 leads to desmethylrestrictinol. The methyltransferase rstn1 then catalyzes the C4 O-methylation of desmethylrestrictinol to produce restrictinol, and the nonribosomal peptide synthetase rstn8 catalyzes the C3 esterification of restrictinol with glycine that leads to restricticin. The protein is Highly reducing polyketide synthase rstn3 of Aspergillus nomiae NRRL (strain ATCC 15546 / NRRL 13137 / CBS 260.88 / M93).